The chain runs to 169 residues: MTRRRERGQQPVGTRRAAREFAFRVLFEAERGKLPLETVFTRAEGDMREGDDTFAQLNAEALAFARQLVDGLGERRADVDAALRRTIRGWDFEQMAQTDLNVLRLATYEMLYTPEPHPPVIESAVRIARKFGGEDSGRFVNGVLGGLSRSLKTAPRLPQNTGAEDGPQE.

This sequence belongs to the NusB family.

Involved in transcription antitermination. Required for transcription of ribosomal RNA (rRNA) genes. Binds specifically to the boxA antiterminator sequence of the ribosomal RNA (rrn) operons. This chain is Transcription antitermination protein NusB, found in Deinococcus geothermalis (strain DSM 11300 / CIP 105573 / AG-3a).